The chain runs to 333 residues: Eukaryotic translation initiation factor 3 subunit H-B (333 aa).

In terms of domain architecture, MPN spans 20 to 154 (IQIEGLVVMK…LKAYRLTPKL (135 aa)). The segment at 249–295 (SKQQQQKHQYVQRRQQENAQRQSRGEPPLPEEDLTKMFKPPQPPPRM) is disordered. Low complexity predominate over residues 250–261 (KQQQQKHQYVQR).

This sequence belongs to the eIF-3 subunit H family. Component of the eukaryotic translation initiation factor 3 (eIF-3) complex, which is composed of 13 subunits: eif3a, eif3b, eif3c, eif3d, eif3e, eif3f, eif3g, eif3h, eif3i, eif3j, eif3k, eif3l and eif3m.

It is found in the cytoplasm. Component of the eukaryotic translation initiation factor 3 (eIF-3) complex, which is involved in protein synthesis of a specialized repertoire of mRNAs and, together with other initiation factors, stimulates binding of mRNA and methionyl-tRNAi to the 40S ribosome. The eIF-3 complex specifically targets and initiates translation of a subset of mRNAs involved in cell proliferation. This chain is Eukaryotic translation initiation factor 3 subunit H-B (eif3hb), found in Danio rerio (Zebrafish).